Consider the following 259-residue polypeptide: Sugar fermentation stimulation protein homolog (259 aa).

This sequence belongs to the SfsA family.

In Chloroflexus aurantiacus (strain ATCC 29364 / DSM 637 / Y-400-fl), this protein is Sugar fermentation stimulation protein homolog.